Here is a 147-residue protein sequence, read N- to C-terminus: uncharacterized protein (147 aa).

This sequence belongs to the limonene-1,2-epoxide hydrolase family.

This is an uncharacterized protein from Bacillus subtilis (strain 168).